The sequence spans 150 residues: Transcriptional regulator MraZ (150 aa).

SpoVT-AbrB domains lie at 7-58 and 87-130; these read KEQH…EPEI and LDSV…SPEK.

Belongs to the MraZ family. Forms oligomers.

It is found in the cytoplasm. The protein resides in the nucleoid. The protein is Transcriptional regulator MraZ of Chlorobium phaeobacteroides (strain BS1).